The primary structure comprises 312 residues: Ribosomal RNA small subunit methyltransferase H (312 aa).

Residues 32–34, D52, F79, D100, and Q107 each bind S-adenosyl-L-methionine; that span reads AGH.

Belongs to the methyltransferase superfamily. RsmH family.

It is found in the cytoplasm. The catalysed reaction is cytidine(1402) in 16S rRNA + S-adenosyl-L-methionine = N(4)-methylcytidine(1402) in 16S rRNA + S-adenosyl-L-homocysteine + H(+). Specifically methylates the N4 position of cytidine in position 1402 (C1402) of 16S rRNA. The protein is Ribosomal RNA small subunit methyltransferase H of Listeria monocytogenes serotype 4b (strain F2365).